Consider the following 768-residue polypeptide: MAGFGNFTENGSEFVFTGTQTPRPMLNYIWNPRILSGVNHFGGGDGAYGARSAAYIDPEGRGRSSLFRGGNRYFYIRDAETGEFWNPGWYPVKRTLDRYSCTHGLGYTRLEGAYGGIAAGARVFVNAEDPVEIWTVTLTNESPREREIKVYSFVEFSLEGYARYSEYNSYVYCDYLAEDDIIVAHNHAQERPHEWFDGFAAASVKPTGYETGKRAFLGNYGDTDSPGSVVRGACSNSLAACEDMVGVLEHTFTLKPGEEVTYHTLWGAADGNETARELTRKLLAPGRIEDDFARLLAEKTAMTEDIAVQTPLAKVNHITNMWVKQQVLLCAEAGRATGKGFRDQLQDAWAVSAFLPGLAKEKIRETLKYQYKDGKCVRGWLPLDPHIYSDGPVWIAPTVNAYLKETGDYAFLQEQVPYLDEGAGTVWEHMLTAVRYSSGDLGEHSLVLAHDGDWNDSLNGIGTGGKGESVWTSIALYHALNETAELAREVIRDEGLARELLELAVRIKEAVNANGWDGDWYLAAYNDHGEKVGSHTEQEGSIYLNSQTWAVMSGLAEGERAGQCLQAVDNKLDSPYGPLTLSPPYTEYNASIGRLTGFVPGIWENGTPYCHGGTFKIVADCVAGRGNEAFDTYSKILPDSAANPSDHSGCEPYAFTNMYFGPANPRAGETAFAWVTGTAGWMFRAVTQYMLGFYPGYDSIRIRPCIPEDWEECSMKRVYRGDTYLLTIRNKNREQCGLKRLTIDGKEIAGDVFPIFGDGLTHTVEVDM.

Residue aspartate 456 is the Proton donor of the active site.

Belongs to the glycosyl hydrolase 94 family.

The catalysed reaction is solabiose + phosphate = D-galactose + alpha-D-glucose 1-phosphate. In terms of biological role, catalyzes the reversible phosphorolysis of solabiose. Catalyzes the phosphorolysis and synthesis of solabiose through a sequential bi-bi mechanism involving the formation of a ternary complex. Is probably involved in the metabolism of solabiose released from solabiose-containing compounds. This is Solabiose phosphorylase from Paenibacillus borealis.